Here is an 874-residue protein sequence, read N- to C-terminus: MFVNLHTNSYYNFLNSALSPKKLVNLAINDQQKAVAITDPNLFGAVEFFITCKQNNIKPIIGLNLTVEYQKNDVKLLLIAKSNKGFQTLNKIALIQQKLEINSLVDQLTDIAVIICSLTTWKSTYKDVYQAKGIEINQTPIAILANAVNCEKTNSDQVVLTVLKQMKQNQTGKITTFDWDLKQKLNQISINENLKVKSEIQPFLDQKTAQQLFSETELNNLNDLVNRCELDLEHLKAASLSLTDNDAAVLESLCQTNLKQFLDKNQDLNKKAYQLRLEKELNVINKLNFASYFLVVNDLVNYAFKKDILIGSGRGSAVGSLVAFLLNITKIDPVQHQLIFERFISTHRQDLPDIDIDIMENKRAEMINYLFEKYGKENCAQIVTFQRFKTRSAVKEVAKLFNDYGISDMILGVLPKDQTITFTDLKATEDSALQLCLQQFGLIVELALAIVDFPRQSSIHASGIVIASNSLIKTIPLLQLDNNHFLTQVSMEWLSFFNLNKFDLLGLINLTMISDVITQIKPSNQTVNQFLNTISWTDQNTFINLVNEDTLGIFQLESFGMKKLLVQIKPKTINQLAIVLALYRPGAQDNINLFINRLHNGYDQSDIDPRILPIVKNTYGVLIFQEQIINIVKVVANYSLEEADSFRRAISKKDVKLIQKNKRNFFERAVQNNFDLKTTTKIFSYIERFANYGFNLSHALGYALLSYWTAWLKTNYPVYFYLWLLNHFQSSKDKQKLIIRTLEKSGIEIYPPLLNKAQPNSVIENKKIYLGLNLIKGINDRYIQNLQKVQHLIQTQNNLQLTDVVSWCLDKTIGDIPLKDLLLLKTMGCFDFFEYTYDFNDAKDFWIKSDHLLFTRMPLEKKDSNFWIKQFFTN.

The protein belongs to the DNA polymerase type-C family. DnaE subfamily. As to quaternary structure, DNA polymerase III contains a core (composed of alpha, epsilon and theta chains) that associates with a tau subunit. This core dimerizes to form the PolIII' complex. PolIII' associates with the gamma complex (composed of gamma, delta, delta', psi and chi chains) and with the beta chain to form the complete DNA polymerase III complex.

Its subcellular location is the cytoplasm. It catalyses the reaction DNA(n) + a 2'-deoxyribonucleoside 5'-triphosphate = DNA(n+1) + diphosphate. In terms of biological role, DNA polymerase III is a complex, multichain enzyme responsible for most of the replicative synthesis in bacteria. This DNA polymerase also exhibits 3' to 5' exonuclease activity. The alpha chain is the DNA polymerase. This Mycoplasma genitalium (strain ATCC 33530 / DSM 19775 / NCTC 10195 / G37) (Mycoplasmoides genitalium) protein is DNA polymerase III subunit alpha (dnaE).